A 272-amino-acid chain; its full sequence is Phosphonates import ATP-binding protein PhnC (272 aa).

The region spanning 2-244 is the ABC transporter domain; that stretch reads LVFDKVNRVY…IQKRLYEIEH (243 aa). 35–42 serves as a coordination point for ATP; the sequence is GPSGAGKS.

The protein belongs to the ABC transporter superfamily. Phosphonates importer (TC 3.A.1.9.1) family. As to quaternary structure, the complex is composed of two ATP-binding proteins (PhnC), two transmembrane proteins (PhnE) and a solute-binding protein (PhnD).

Its subcellular location is the cell inner membrane. It catalyses the reaction phosphonate(out) + ATP + H2O = phosphonate(in) + ADP + phosphate + H(+). In terms of biological role, part of the ABC transporter complex PhnCDE involved in phosphonates import. Responsible for energy coupling to the transport system. The chain is Phosphonates import ATP-binding protein PhnC from Hydrogenovibrio crunogenus (strain DSM 25203 / XCL-2) (Thiomicrospira crunogena).